The following is a 386-amino-acid chain: Galactokinase (386 aa).

35 to 38 (EHTD) is a binding site for substrate. ATP is bound by residues Ser69 and 125-131 (GAGLSSS). The Mg(2+) site is built by Ser131 and Glu163. The active-site Proton acceptor is the Asp175. Tyr224 is a substrate binding site.

This sequence belongs to the GHMP kinase family. GalK subfamily.

It localises to the cytoplasm. The catalysed reaction is alpha-D-galactose + ATP = alpha-D-galactose 1-phosphate + ADP + H(+). It participates in carbohydrate metabolism; galactose metabolism. Functionally, catalyzes the transfer of the gamma-phosphate of ATP to D-galactose to form alpha-D-galactose-1-phosphate (Gal-1-P). This chain is Galactokinase, found in Vibrio parahaemolyticus serotype O3:K6 (strain RIMD 2210633).